The following is a 358-amino-acid chain: PDZ and LIM domain protein 3 (358 aa).

The region spanning 1–84 (MPQNVLLPGP…QLCLKIDRAE (84 aa)) is the PDZ domain. Disordered regions lie at residues 126 to 155 (FILPGRSSGSSTPSGFDPGSGRSTPSSVST) and 237 to 274 (DTEHPSKPRQSGSFKILQDMVDDDPDRPSGTRSVRAPV). Residues 129–146 (PGRSSGSSTPSGFDPGSG) show a composition bias toward low complexity. The 60-residue stretch at 288 to 347 (PICDRCGNGIVGTVVKAKDKLRHPDCFVCSDCNLNLKQKGYFFVEGQLYCEAHARARMRP) folds into the LIM zinc-binding domain.

The protein resides in the cytoplasm. It localises to the myofibril. Its subcellular location is the sarcomere. The protein localises to the z line. Functionally, may play a role in the organization of actin filament arrays within muscle cells. The polypeptide is PDZ and LIM domain protein 3 (pdlim3) (Xenopus laevis (African clawed frog)).